The primary structure comprises 576 residues: Trehalase (576 aa).

Positions 1 to 20 (MTWELHLLLLLGLGLRSQEA) are cleaved as a signal peptide. The N-linked (GlcNAc...) asparagine glycan is linked to N75. Residues R165, 172–173 (WD), N209, and 218–220 (RSQ) each bind substrate. N258 carries an N-linked (GlcNAc...) asparagine glycan. Residues 283-285 (RPE) and G316 contribute to the substrate site. D318 acts as the Proton donor/acceptor in catalysis. N366 carries N-linked (GlcNAc...) asparagine glycosylation. The Proton donor/acceptor role is filled by E511. E526 contacts substrate. S553 carries GPI-anchor amidated serine lipidation. Residues 554–576 (GTQLASLGPHCLVAALLLSLLLQ) constitute a propeptide, removed in mature form.

This sequence belongs to the glycosyl hydrolase 37 family. In terms of assembly, homodimer; disulfide-linked.

It is found in the cell membrane. It carries out the reaction alpha,alpha-trehalose + H2O = alpha-D-glucose + beta-D-glucose. In terms of biological role, intestinal trehalase is probably involved in the hydrolysis of ingested trehalose. This Mus musculus (Mouse) protein is Trehalase.